The following is a 99-amino-acid chain: UPF0235 protein Cag_0319 (99 aa).

The protein belongs to the UPF0235 family.

The sequence is that of UPF0235 protein Cag_0319 from Chlorobium chlorochromatii (strain CaD3).